We begin with the raw amino-acid sequence, 86 residues long: Conotoxin Ec15a (86 aa).

The N-terminal stretch at 1–23 is a signal peptide; that stretch reads MEKLTILILVATVLLAIQVLGQG. A propeptide spanning residues 24-49 is cleaved from the precursor; sequence EGEKPPKEWVQQYAAKRLWALMKGPR. Pyrrolidone carboxylic acid is present on glutamine 50.

Belongs to the conotoxin O2 superfamily. Contains 4 disulfide bonds. As to expression, expressed by the venom duct.

It localises to the secreted. This chain is Conotoxin Ec15a, found in Conus emaciatus (False virgin cone).